A 179-amino-acid polypeptide reads, in one-letter code: Large ribosomal subunit protein bL17 (179 aa).

Residues 123 to 179 (RTRGTDTLPDTVTDTGPDSAPDPVPGSEPGSAAGDLPDADTAPADPGESSSNQRVIR) form a disordered region. Residues 154 to 168 (AAGDLPDADTAPADP) show a composition bias toward low complexity. Residues 170 to 179 (ESSSNQRVIR) are compositionally biased toward polar residues.

This sequence belongs to the bacterial ribosomal protein bL17 family. Part of the 50S ribosomal subunit. Contacts protein L32.

The sequence is that of Large ribosomal subunit protein bL17 from Tropheryma whipplei (strain Twist) (Whipple's bacillus).